The chain runs to 131 residues: Sec-independent protein translocase protein TatB (131 aa).

The helical transmembrane segment at 2–22 (FANIGWGEMLVLVMVGLVVLG) threads the bilayer. A disordered region spans residues 90 to 131 (DSLFTGDFDRPTPKKPDAAGSAGPDATEQIGAGPIPFDSDAT). Over residues 96-106 (DFDRPTPKKPD) the composition is skewed to basic and acidic residues.

It belongs to the TatB family. The Tat system comprises two distinct complexes: a TatABC complex, containing multiple copies of TatA, TatB and TatC subunits, and a separate TatA complex, containing only TatA subunits. Substrates initially bind to the TatABC complex, which probably triggers association of the separate TatA complex to form the active translocon.

The protein resides in the cell membrane. Its function is as follows. Part of the twin-arginine translocation (Tat) system that transports large folded proteins containing a characteristic twin-arginine motif in their signal peptide across membranes. Together with TatC, TatB is part of a receptor directly interacting with Tat signal peptides. TatB may form an oligomeric binding site that transiently accommodates folded Tat precursor proteins before their translocation. The chain is Sec-independent protein translocase protein TatB from Mycobacterium bovis (strain ATCC BAA-935 / AF2122/97).